The primary structure comprises 139 residues: MRIMGLDVGSKTVGVAISDPLGFTAQGLEIIKINEDKQDFGFDRLAELVKQYQVDRFVIGLPKNMNNTSGPRVEASKAYGDRIEELFHIPVSYQDERLTTVEAERMLIEQADISRGKRKKVIDKLAAQLILQNYLDCNY.

This sequence belongs to the YqgF nuclease family.

It is found in the cytoplasm. In terms of biological role, could be a nuclease involved in processing of the 5'-end of pre-16S rRNA. This chain is Putative pre-16S rRNA nuclease, found in Streptococcus equi subsp. zooepidemicus (strain H70).